The chain runs to 209 residues: PITH domain-containing protein 1 (209 aa).

The 173-residue stretch at 18–190 (SDGPERGLEY…EVTICNYEAA (173 aa)) folds into the PITH domain.

This sequence belongs to the PITHD1 family.

It localises to the cytoplasm. Its function is as follows. May play a role in promoting megakaryocyte differentiation by up-regulating RUNX1 expression. This chain is PITH domain-containing protein 1 (pithd1), found in Xenopus laevis (African clawed frog).